Reading from the N-terminus, the 520-residue chain is Bifunctional purine biosynthesis protein PurH (520 aa).

In terms of domain architecture, MGS-like spans 1 to 146 (MAPVALLSVS…KNHADVAVLT (146 aa)).

This sequence belongs to the PurH family.

The catalysed reaction is (6R)-10-formyltetrahydrofolate + 5-amino-1-(5-phospho-beta-D-ribosyl)imidazole-4-carboxamide = 5-formamido-1-(5-phospho-D-ribosyl)imidazole-4-carboxamide + (6S)-5,6,7,8-tetrahydrofolate. It carries out the reaction IMP + H2O = 5-formamido-1-(5-phospho-D-ribosyl)imidazole-4-carboxamide. It functions in the pathway purine metabolism; IMP biosynthesis via de novo pathway; 5-formamido-1-(5-phospho-D-ribosyl)imidazole-4-carboxamide from 5-amino-1-(5-phospho-D-ribosyl)imidazole-4-carboxamide (10-formyl THF route): step 1/1. Its pathway is purine metabolism; IMP biosynthesis via de novo pathway; IMP from 5-formamido-1-(5-phospho-D-ribosyl)imidazole-4-carboxamide: step 1/1. The protein is Bifunctional purine biosynthesis protein PurH of Synechococcus sp. (strain CC9605).